Consider the following 189-residue polypeptide: Movement protein (189 aa).

Belongs to the tombusvirus/aureusvirus movement protein p22 family. Interacts with host protein HFI22. In terms of processing, phosphorylated.

The protein resides in the host membrane. Transports viral genome to neighboring plant cells directly through plasmosdesmata, without any budding. The movement protein allows efficient cell to cell propagation, by bypassing the host cell wall barrier. The protein is Movement protein of Capsicum annuum (Capsicum pepper).